We begin with the raw amino-acid sequence, 65 residues long: Large ribosomal subunit protein bL33c (65 aa).

The protein belongs to the bacterial ribosomal protein bL33 family.

The protein resides in the plastid. The protein localises to the chloroplast. The chain is Large ribosomal subunit protein bL33c from Chaetosphaeridium globosum (Charophycean green alga).